The following is a 175-amino-acid chain: Electron transport protein HydN (175 aa).

4 consecutive 4Fe-4S ferredoxin-type domains span residues 2–32, 48–79, 80–109, and 124–157; these read NRFI…NQDC, KGVN…SRDK, GFVH…VVVR, and DKAE…CVDR. The [4Fe-4S] cluster site is built by cysteine 12, cysteine 15, cysteine 18, cysteine 22, cysteine 58, cysteine 61, cysteine 66, cysteine 70, cysteine 89, cysteine 92, cysteine 95, cysteine 99, cysteine 131, cysteine 134, cysteine 143, and cysteine 147.

[4Fe-4S] cluster is required as a cofactor.

Electron transport from formate to hydrogen. This chain is Electron transport protein HydN (hydN), found in Escherichia coli O157:H7.